A 660-amino-acid polypeptide reads, in one-letter code: Probable serine/threonine-protein kinase CE0033 (660 aa).

The region spanning 9-278 is the Protein kinase domain; it reads YELGASIGSG…AEMAADLELL (270 aa). Residues 15 to 23 and lysine 38 contribute to the ATP site; that span reads IGSGGMSEV. Aspartate 136 functions as the Proton acceptor in the catalytic mechanism. Positions 288 to 319 are disordered; sequence RAHVEKPDEPETVVVPQRLSTPPPPPTPAMPA. PASTA domains follow at residues 377–443, 444–512, and 513–577; these read SAST…TISS, GREV…TVST, and GPSL…EISN.

Belongs to the protein kinase superfamily. Ser/Thr protein kinase family.

The enzyme catalyses L-seryl-[protein] + ATP = O-phospho-L-seryl-[protein] + ADP + H(+). It catalyses the reaction L-threonyl-[protein] + ATP = O-phospho-L-threonyl-[protein] + ADP + H(+). This Corynebacterium efficiens (strain DSM 44549 / YS-314 / AJ 12310 / JCM 11189 / NBRC 100395) protein is Probable serine/threonine-protein kinase CE0033.